The primary structure comprises 243 residues: Tubulin-folding cofactor B (243 aa).

Positions 181–223 (RAESLGPGYWVGIQYDEPLGKHDGMVKGTRFFECPRLQGGMVR) constitute a CAP-Gly domain.

The protein belongs to the TBCB family. In terms of assembly, supercomplex made of cofactors A to E. Cofactors A and D function by capturing and stabilizing tubulin in a quasi-native conformation. Cofactor E binds to the cofactor D-tubulin complex; interaction with cofactor C then causes the release of tubulin polypeptides that are committed to the native state. Interacts with TUBA6. Expressed in roots, stems, leaves, flowers and siliques.

The protein localises to the cytoplasm. In terms of biological role, involved in control of cell division. Regulates probably the availability of alpha-tubulin for dimerization of alpha-/beta-tubulin, which is required for proper microtubule biogenesis. Decreased expression of TFCB results in enlarged mesophyll cells and leaf epidermal cells with bulged nuclei, increased ploidy and increased numbers of spindles and phragmoplasts. This chain is Tubulin-folding cofactor B (TFCB), found in Arabidopsis thaliana (Mouse-ear cress).